A 291-amino-acid polypeptide reads, in one-letter code: Transmembrane protein 41B (291 aa).

Residues 1–39 (MAKGRVAERSQLGAHHTTPVGDGAAGTRGLAAPGSRDHQ) form a disordered region. Position 18 is a phosphothreonine (Thr-18). A Phosphoserine modification is found at Ser-35. The next 6 membrane-spanning stretches (helical) occupy residues 52-72 (MSLL…FLVY), 109-129 (FYVQ…TFAI), 147-169 (LALF…LSYL), 197-217 (LINY…FINI), 225-245 (PLKV…FVAI), and 262-282 (SWNS…PAIF). A VTT domain; required for its function in autophagy region spans residues 140–251 (GFLYPFPLAL…FVAIKAGTTL (112 aa)).

Belongs to the TMEM41 family. Interacts with VMP1. Interacts with COPA, COPB1, VDAC1 and ERLIN2. Interacts with ATG2A. Interacts with SURF4. In terms of assembly, (Microbial infection) Interacts with Zika virus NS4A protein and Yellow fever virus NS4B protein.

The protein resides in the endoplasmic reticulum membrane. Its subcellular location is the endomembrane system. It localises to the cytoplasm. The enzyme catalyses a 1,2-diacyl-sn-glycero-3-phospho-L-serine(in) = a 1,2-diacyl-sn-glycero-3-phospho-L-serine(out). The catalysed reaction is cholesterol(in) = cholesterol(out). It carries out the reaction a 1,2-diacyl-sn-glycero-3-phosphocholine(in) = a 1,2-diacyl-sn-glycero-3-phosphocholine(out). It catalyses the reaction a 1,2-diacyl-sn-glycero-3-phosphoethanolamine(in) = a 1,2-diacyl-sn-glycero-3-phosphoethanolamine(out). Phospholipid scramblase involved in lipid homeostasis and membrane dynamics processes. Has phospholipid scramblase activity toward cholesterol and phosphatidylserine, as well as phosphatidylethanolamine and phosphatidylcholine. Required for autophagosome formation: participates in early stages of autophagosome biogenesis at the endoplasmic reticulum (ER) membrane by reequilibrating the leaflets of the ER as lipids are extracted by ATG2 (ATG2A or ATG2B) to mediate autophagosome assembly. In addition to autophagy, involved in other processes in which phospholipid scramblase activity is required. Required for normal motor neuron development. Its function is as follows. (Microbial infection) Critical host factor required for infection by human coronaviruses SARS-CoV-2, HCoV-OC43, HCoV-NL63, and HCoV-229E, as well as all flaviviruses tested such as Zika virus and Yellow fever virus. Required post-entry of the virus to facilitate the ER membrane remodeling necessary to form replication organelles. This chain is Transmembrane protein 41B, found in Homo sapiens (Human).